The following is a 514-amino-acid chain: Cilia- and flagella-associated protein 53 (514 aa).

Coiled coils occupy residues 91 to 176 and 205 to 478; these read VINT…EKKV and WEED…AGLA. 2 disordered regions span residues 261 to 296 and 495 to 514; these read QNKA…QDKI and QALS…KPPL.

Belongs to the CFAP53 family. In terms of assembly, microtubule inner protein component of sperm flagellar doublet microtubules. Interacts with PIERCE1 and PIERCE2; the interactions link outer dynein arms docking complex (ODA-DC) to the internal microtubule inner proteins (MIP) in cilium axoneme. Interacts with CCDC38. Interacts with CCDC42 and IFT88. Interacts with centriolar satellite proteins PIBF1/CEP90 and PCM1. Interacts with dyneins DNAIC1, DNAIC2 AND DNAH11 and with ODA-DC component ODAD4/TTC25. Expressed predominantly in testis (at protein level). In embryos at 8 dpc, specifically expressed in the node, in particular within the pit cells that are located at the center of the node and have rotating monocilia on their apical surface. In the adult, expressed in epithelial cells of the trachea, brain ventricles, oviduct and testis.

It is found in the cytoplasm. Its subcellular location is the cytoskeleton. The protein resides in the cilium axoneme. It localises to the flagellum axoneme. The protein localises to the microtubule organizing center. It is found in the centrosome. Its subcellular location is the centriolar satellite. The protein resides in the spindle pole. Microtubule inner protein (MIP) part of the dynein-decorated doublet microtubules (DMTs) in cilia axoneme, which is required for motile cilia beating. Regulates motility patterns of both 9+0 and 9+2 motile cilia through differential localization and recruitment of axonemal dynein components. Required for centriolar satellite integrity and non-motile cilium assembly. Required for motile cilium formation. Through its role in the beating of primary cilia, involved in the establishment of organ laterality during embryogenesis. Required for sperm flagellum biogenesis and is essential for male fertility. This is Cilia- and flagella-associated protein 53 from Mus musculus (Mouse).